We begin with the raw amino-acid sequence, 336 residues long: tRNA N6-adenosine threonylcarbamoyltransferase (336 aa).

His-114 and His-118 together coordinate Fe cation. Substrate is bound by residues 136 to 140 (LVSGG), Asp-169, Gly-182, Asp-186, and Asn-275. Asp-301 contributes to the Fe cation binding site.

This sequence belongs to the KAE1 / TsaD family. Requires Fe(2+) as cofactor.

It is found in the cytoplasm. It carries out the reaction L-threonylcarbamoyladenylate + adenosine(37) in tRNA = N(6)-L-threonylcarbamoyladenosine(37) in tRNA + AMP + H(+). In terms of biological role, required for the formation of a threonylcarbamoyl group on adenosine at position 37 (t(6)A37) in tRNAs that read codons beginning with adenine. Is involved in the transfer of the threonylcarbamoyl moiety of threonylcarbamoyl-AMP (TC-AMP) to the N6 group of A37, together with TsaE and TsaB. TsaD likely plays a direct catalytic role in this reaction. This is tRNA N6-adenosine threonylcarbamoyltransferase from Streptococcus pneumoniae (strain JJA).